The following is a 174-amino-acid chain: Probable adenylyl-sulfate kinase (174 aa).

10-17 (GPSGAGKT) is a binding site for ATP. Catalysis depends on serine 84, which acts as the Phosphoserine intermediate.

It belongs to the APS kinase family.

The enzyme catalyses adenosine 5'-phosphosulfate + ATP = 3'-phosphoadenylyl sulfate + ADP + H(+). It participates in sulfur metabolism; hydrogen sulfide biosynthesis; sulfite from sulfate: step 2/3. In terms of biological role, catalyzes the synthesis of activated sulfate. The protein is Probable adenylyl-sulfate kinase (cysC) of Pyrococcus abyssi (strain GE5 / Orsay).